Consider the following 870-residue polypeptide: DNA mismatch repair protein MutS (870 aa).

An ATP-binding site is contributed by Gly629–Ser636.

It belongs to the DNA mismatch repair MutS family.

Its function is as follows. This protein is involved in the repair of mismatches in DNA. It is possible that it carries out the mismatch recognition step. This protein has a weak ATPase activity. The sequence is that of DNA mismatch repair protein MutS from Polaromonas naphthalenivorans (strain CJ2).